Consider the following 150-residue polypeptide: Large ribosomal subunit protein bL9 (150 aa).

The protein belongs to the bacterial ribosomal protein bL9 family.

Its function is as follows. Binds to the 23S rRNA. This Streptococcus gordonii (strain Challis / ATCC 35105 / BCRC 15272 / CH1 / DL1 / V288) protein is Large ribosomal subunit protein bL9.